Here is a 160-residue protein sequence, read N- to C-terminus: 2-C-methyl-D-erythritol 2,4-cyclodiphosphate synthase (160 aa).

A divalent metal cation-binding residues include Asp-9 and His-11. Residues 9 to 11 (DVH) and 35 to 36 (HS) each bind 4-CDP-2-C-methyl-D-erythritol 2-phosphate. Residue His-43 participates in a divalent metal cation binding. 4-CDP-2-C-methyl-D-erythritol 2-phosphate contacts are provided by residues 57–59 (DIG), 62–66 (FPDTD), 133–136 (TTTE), Phe-140, and Arg-143.

The protein belongs to the IspF family. In terms of assembly, homotrimer. A divalent metal cation is required as a cofactor.

It carries out the reaction 4-CDP-2-C-methyl-D-erythritol 2-phosphate = 2-C-methyl-D-erythritol 2,4-cyclic diphosphate + CMP. Its pathway is isoprenoid biosynthesis; isopentenyl diphosphate biosynthesis via DXP pathway; isopentenyl diphosphate from 1-deoxy-D-xylulose 5-phosphate: step 4/6. In terms of biological role, involved in the biosynthesis of isopentenyl diphosphate (IPP) and dimethylallyl diphosphate (DMAPP), two major building blocks of isoprenoid compounds. Catalyzes the conversion of 4-diphosphocytidyl-2-C-methyl-D-erythritol 2-phosphate (CDP-ME2P) to 2-C-methyl-D-erythritol 2,4-cyclodiphosphate (ME-CPP) with a corresponding release of cytidine 5-monophosphate (CMP). This chain is 2-C-methyl-D-erythritol 2,4-cyclodiphosphate synthase, found in Haemophilus ducreyi (strain 35000HP / ATCC 700724).